The chain runs to 238 residues: D-aminoacyl-tRNA deacylase (238 aa).

It belongs to the DtdA deacylase family. As to quaternary structure, monomer. Zn(2+) serves as cofactor.

It catalyses the reaction a D-aminoacyl-tRNA + H2O = a tRNA + a D-alpha-amino acid + H(+). The catalysed reaction is glycyl-tRNA(Ala) + H2O = tRNA(Ala) + glycine + H(+). It carries out the reaction D-tyrosyl-tRNA(Tyr) + H2O = D-tyrosine + tRNA(Tyr). D-aminoacyl-tRNA deacylase with broad substrate specificity. By recycling D-aminoacyl-tRNA to D-amino acids and free tRNA molecules, this enzyme counteracts the toxicity associated with the formation of D-aminoacyl-tRNA entities in vivo. Catalyzes the hydrolysis of D-tyrosyl-tRNA(Tyr). The chain is D-aminoacyl-tRNA deacylase from Saccharolobus solfataricus (strain ATCC 35092 / DSM 1617 / JCM 11322 / P2) (Sulfolobus solfataricus).